Consider the following 269-residue polypeptide: Indole-3-glycerol phosphate synthase (269 aa).

This sequence belongs to the TrpC family.

It carries out the reaction 1-(2-carboxyphenylamino)-1-deoxy-D-ribulose 5-phosphate + H(+) = (1S,2R)-1-C-(indol-3-yl)glycerol 3-phosphate + CO2 + H2O. The protein operates within amino-acid biosynthesis; L-tryptophan biosynthesis; L-tryptophan from chorismate: step 4/5. The polypeptide is Indole-3-glycerol phosphate synthase (Saccharopolyspora erythraea (strain ATCC 11635 / DSM 40517 / JCM 4748 / NBRC 13426 / NCIMB 8594 / NRRL 2338)).